The sequence spans 96 residues: Neutrophil defensin 1 (96 aa).

The N-terminal stretch at 1-19 (MRTLVILAAILLVALQAQA) is a signal peptide. A propeptide spanning residues 20 to 66 (EPLQARTDEATAAQEQIPTDNPEVVVSLAWDESLAPKDSVPGLRKNM) is cleaved from the precursor. Cystine bridges form between cysteine 68-cysteine 96, cysteine 70-cysteine 85, and cysteine 75-cysteine 95. At tyrosine 87 the chain carries Phosphotyrosine.

Tetramer. Dimer. Interacts with RETN. Post-translationally, ADP-ribosylation drastically reduces cytotoxic and antibacterial activities, and enhances IL8 production.

Its subcellular location is the secreted. Effector molecule of the innate immune system that acts via antibiotic-like properties against a broad array of infectious agents including bacteria, fungi, and viruses or by promoting the activation and maturation of some APCs. Interacts with the essential precursor of cell wall synthesis lipid II to inhibit bacterial cell wall synthesis. Inhibits adenovirus infection via inhibition of viral disassembly at the vertex region, thereby restricting the release of internal capsid protein pVI, which is required for endosomal membrane penetration during cell entry. In addition, interaction with adenovirus capsid leads to the redirection of viral particles to TLR4 thereby promoting a NLRP3-mediated inflammasome response and interleukin 1-beta (IL-1beta) release. Induces the production of proinflammatory cytokines including type I interferon (IFN) in plasmacytoid dendritic cells (pDCs) by triggering the degradation of NFKBIA and nuclear translocation of IRF1, both of which are required for activation of pDCs. The protein is Neutrophil defensin 1 of Macaca mulatta (Rhesus macaque).